Reading from the N-terminus, the 576-residue chain is 2-succinyl-5-enolpyruvyl-6-hydroxy-3-cyclohexene-1-carboxylate synthase (576 aa).

The protein belongs to the TPP enzyme family. MenD subfamily. As to quaternary structure, homodimer. It depends on Mg(2+) as a cofactor. Mn(2+) serves as cofactor. Requires thiamine diphosphate as cofactor.

The catalysed reaction is isochorismate + 2-oxoglutarate + H(+) = 5-enolpyruvoyl-6-hydroxy-2-succinyl-cyclohex-3-ene-1-carboxylate + CO2. It participates in quinol/quinone metabolism; 1,4-dihydroxy-2-naphthoate biosynthesis; 1,4-dihydroxy-2-naphthoate from chorismate: step 2/7. Its pathway is quinol/quinone metabolism; menaquinone biosynthesis. Catalyzes the thiamine diphosphate-dependent decarboxylation of 2-oxoglutarate and the subsequent addition of the resulting succinic semialdehyde-thiamine pyrophosphate anion to isochorismate to yield 2-succinyl-5-enolpyruvyl-6-hydroxy-3-cyclohexene-1-carboxylate (SEPHCHC). This is 2-succinyl-5-enolpyruvyl-6-hydroxy-3-cyclohexene-1-carboxylate synthase from Photobacterium profundum (strain SS9).